Reading from the N-terminus, the 341-residue chain is Heat-shock protein cognate (HSC) co-chaperone sgt12 (341 aa).

The interval 86–123 is disordered; sequence PSKEPASAGAQAQSTEAQQPKAGAPTPESDKLKSEGNA. TPR repeat units follow at residues 114–147, 148–181, and 182–215; these read SDKLKSEGNAAMARKEYSKAIDLYTQALSIAPAN, PIYLSNRAAAYSASGQHEKAAEDAELATVVDPKY, and SKAWSRLGLARFDMADYKGAKEAYEKGIEAEGNG. The segment at 232–280 is disordered; that stretch reads EEANRGAEPPADDVDDAAGASRGAGGMPDLSSLASMLGGRGGGGGGMPD. A compositionally biased stretch (gly residues) spans 269–278; the sequence is GGRGGGGGGM.

The protein belongs to the SGT family. In terms of assembly, forms homodimers. Component of the get4/get5/sgt2 sorting complex. Dimers of sgt2 bind directly a single get5. Binds HSC family members ssa1, sse1, hsp104 and hsc82 via its TPR domain.

The protein resides in the cytoplasm. Its function is as follows. Heat-shock protein cognate (HSC) co-chaperone that preferentially binds endoplasmic reticulum-destined tail-anchored (TA) proteins and directs them to the GET (guided entry of TA proteins) pathway via get4 and get5. Get4 and get5 form an obligate complex that catalyzes the transfer of tail-anchored proteins destined to the endoplasmic reticulum from sgt2 to the cytosolic targeting factor which then targets the TA protein to the ER membrane via get1/get2. This Aspergillus fumigatus (strain ATCC MYA-4609 / CBS 101355 / FGSC A1100 / Af293) (Neosartorya fumigata) protein is Heat-shock protein cognate (HSC) co-chaperone sgt12.